We begin with the raw amino-acid sequence, 433 residues long: 23S rRNA (uracil(1939)-C(5))-methyltransferase RlmD (433 aa).

Residues 10–68 (RTTTRQIITVSVNDLDSFGQGVARHNGKTLFIPGLLPQENAEVTVTEDKKQYARAKVVR) form the TRAM domain. Residues Cys-81, Cys-87, Cys-90, and Cys-162 each coordinate [4Fe-4S] cluster. S-adenosyl-L-methionine-binding residues include Gln-265, Phe-294, Asn-299, Glu-315, Asn-342, and Asp-363. Cys-389 acts as the Nucleophile in catalysis.

It belongs to the class I-like SAM-binding methyltransferase superfamily. RNA M5U methyltransferase family. RlmD subfamily.

The catalysed reaction is uridine(1939) in 23S rRNA + S-adenosyl-L-methionine = 5-methyluridine(1939) in 23S rRNA + S-adenosyl-L-homocysteine + H(+). Catalyzes the formation of 5-methyl-uridine at position 1939 (m5U1939) in 23S rRNA. The protein is 23S rRNA (uracil(1939)-C(5))-methyltransferase RlmD of Shigella boydii serotype 4 (strain Sb227).